We begin with the raw amino-acid sequence, 445 residues long: Glutamyl-tRNA reductase (445 aa).

Substrate is bound by residues 49–52 (TCNR), S109, 114–116 (ETQ), and Q120. The Nucleophile role is filled by C50. 189–194 (GAGEMS) provides a ligand contact to NADP(+).

The protein belongs to the glutamyl-tRNA reductase family. As to quaternary structure, homodimer.

It catalyses the reaction (S)-4-amino-5-oxopentanoate + tRNA(Glu) + NADP(+) = L-glutamyl-tRNA(Glu) + NADPH + H(+). It functions in the pathway porphyrin-containing compound metabolism; protoporphyrin-IX biosynthesis; 5-aminolevulinate from L-glutamyl-tRNA(Glu): step 1/2. Its function is as follows. Catalyzes the NADPH-dependent reduction of glutamyl-tRNA(Glu) to glutamate 1-semialdehyde (GSA). This chain is Glutamyl-tRNA reductase, found in Staphylococcus carnosus (strain TM300).